A 46-amino-acid chain; its full sequence is Iota-conotoxin-like r11b (46 aa).

4-hydroxyproline is present on residues proline 2 and proline 11. Disulfide bonds link cysteine 5–cysteine 19, cysteine 12–cysteine 22, cysteine 18–cysteine 27, and cysteine 21–cysteine 38. Proline 29 carries the post-translational modification 4-hydroxyproline. Phenylalanine 44 carries the D-phenylalanine modification.

The natural D-Phe form of the peptide is more potent than the synthetic L-Phe form. In terms of tissue distribution, expressed by the venom duct.

It localises to the secreted. In terms of biological role, iota-conotoxins bind to voltage-gated sodium channels (Nav) and act as agonists by shifting the voltage-dependence of activation to more hyperpolarized levels. Produces excitatory symptoms when injected intracranially into mice and is lethal at higher doses. Exposure to frog cutaneous pectoris induces spontaneous and repetitive action potentials. This effect is slowly reversible. Natural peptide (with D-Phe) is active on nerve, but not on muscle. Synthetic peptide (with L-Phe) is not active on both nerve and muscle. The sequence is that of Iota-conotoxin-like r11b from Conus radiatus (Rayed cone).